Consider the following 186-residue polypeptide: Putative 5'(3')-deoxyribonucleotidase (186 aa).

The active-site Nucleophile is Asp6. Asp6, Asp8, and Asp137 together coordinate Mg(2+). Asp8 (proton donor) is an active-site residue.

Belongs to the 5'(3')-deoxyribonucleotidase family. Mg(2+) is required as a cofactor.

Its function is as follows. Dephosphorylates the 5' and 2'(3')-phosphates of deoxyribonucleotides. This chain is Putative 5'(3')-deoxyribonucleotidase, found in Bordetella bronchiseptica (strain ATCC BAA-588 / NCTC 13252 / RB50) (Alcaligenes bronchisepticus).